The sequence spans 616 residues: Protein RIK (616 aa).

A compositionally biased stretch (basic and acidic residues) spans 1–11 (MTEDRAHKVAD). A disordered region spans residues 1-32 (MTEDRAHKVADEPAASGRQSPERKKRKWDQPA). The region spanning 198–304 (GTTSESISVP…AKVLAENLLD (107 aa)) is the KH domain. 3 stretches are compositionally biased toward polar residues: residues 432 to 449 (TQAV…TKGN), 475 to 484 (TESQNSQQGS), and 491 to 502 (LDSSGNIGSSSI). Disordered regions lie at residues 432–455 (TQAV…LDAE) and 467–616 (LPVS…HTCV). Over residues 534 to 564 (LPPPLKSMLPLPPRSMPPPPPKSMPPPPPKF) the composition is skewed to pro residues. Basic and acidic residues-rich tracts occupy residues 565–575 (PSDEFLSRNEN) and 598–610 (SERR…EEKN).

In terms of assembly, interacts with RS2. Expressed in vegetative tissues. More abundant in apices and young leaf primordia than in fully expanded leaf tissues.

It localises to the nucleus. The sequence is that of Protein RIK from Zea mays (Maize).